A 284-amino-acid chain; its full sequence is Bifunctional protein FolD 1 (284 aa).

Residues glycine 166–serine 168, serine 191, and isoleucine 232 contribute to the NADP(+) site.

This sequence belongs to the tetrahydrofolate dehydrogenase/cyclohydrolase family. As to quaternary structure, homodimer.

It catalyses the reaction (6R)-5,10-methylene-5,6,7,8-tetrahydrofolate + NADP(+) = (6R)-5,10-methenyltetrahydrofolate + NADPH. The catalysed reaction is (6R)-5,10-methenyltetrahydrofolate + H2O = (6R)-10-formyltetrahydrofolate + H(+). It participates in one-carbon metabolism; tetrahydrofolate interconversion. Its function is as follows. Catalyzes the oxidation of 5,10-methylenetetrahydrofolate to 5,10-methenyltetrahydrofolate and then the hydrolysis of 5,10-methenyltetrahydrofolate to 10-formyltetrahydrofolate. This Hydrogenovibrio crunogenus (strain DSM 25203 / XCL-2) (Thiomicrospira crunogena) protein is Bifunctional protein FolD 1.